A 640-amino-acid polypeptide reads, in one-letter code: ESX-3 secretion system protein EccA3 (640 aa).

393 to 400 provides a ligand contact to ATP; that stretch reads GPPGTGKT.

It belongs to the CbxX/CfxQ family. Part of the ESX-3 / type VII secretion system (T7SS), which is composed of cytosolic and membrane components.

Its subcellular location is the cytoplasm. In terms of biological role, part of an ESX-3 / type VII specialized secretion system (T7SS), which exports several proteins. EccA3 exhibits ATPase activity and may provide energy for the export of ESX-3 substrates. The sequence is that of ESX-3 secretion system protein EccA3 from Mycobacterium leprae (strain TN).